We begin with the raw amino-acid sequence, 423 residues long: uncharacterized protein (423 aa).

The protein belongs to the mycobacterial PPE family.

In terms of biological role, could be required for host endothelial-cell invasion and/or intracellular survival. This is an uncharacterized protein from Mycobacterium tuberculosis (strain CDC 1551 / Oshkosh).